Reading from the N-terminus, the 1359-residue chain is Junctional cadherin 5-associated protein (1359 aa).

9 disordered regions span residues 1–147, 249–411, 454–554, 591–813, 840–1076, 1105–1141, 1157–1207, 1225–1260, and 1276–1359; these read MYSV…SLPV, PLNE…PAHP, NSSP…TCET, SHLP…CNSK, KELQ…TIEI, RAGQ…PRVS, PLFV…KDVE, SVAG…DRLM, and FRNA…VERV. Positions 15 to 28 are enriched in basic and acidic residues; it reads LSRDPPASREDNPK. Polar residues-rich tracts occupy residues 82 to 91 and 98 to 112; these read PQSTSASRTS and QPPS…TGND. Basic and acidic residues predominate over residues 120-135; that stretch reads RQEARSQKPREHENLE. Low complexity predominate over residues 302-321; that stretch reads QQSRGGADSSDSQDSQQMDA. Pro residues predominate over residues 335-353; sequence LEPPVYVPPPSYRSPPQNI. A compositionally biased stretch (polar residues) spans 539-554; sequence RQVSSPYSQGESTCET. The segment covering 591-613 has biased composition (basic and acidic residues); sequence SHLPDRDMDNNDLKPSADQKNGS. Polar residues-rich tracts occupy residues 619 to 632, 689 to 704, and 756 to 773; these read LQEQ…STDL, QQTQ…SSQL, and LSPS…SVDQ. Residues 849–859 show a composition bias toward low complexity; it reads SSSSSSSSSSS. Positions 868-880 are enriched in basic and acidic residues; that stretch reads QENRAHCRQEDVG. Positions 1003–1013 are enriched in polar residues; sequence PKITSAFSSVK. Residues serine 1044 and serine 1050 each carry the phosphoserine modification. Serine 1194 carries the phosphoserine modification. Serine 1281 carries the post-translational modification Phosphoserine. Over residues 1324 to 1342 the composition is skewed to basic and acidic residues; that stretch reads SISREEKEHPAAQKEKSMD.

The protein resides in the cell junction. The protein localises to the adherens junction. This Homo sapiens (Human) protein is Junctional cadherin 5-associated protein.